A 394-amino-acid polypeptide reads, in one-letter code: Elongation factor Tu (394 aa).

The 195-residue stretch at 10–204 folds into the tr-type G domain; sequence KPHVNVGTIG…FLDSYIPEPE (195 aa). The segment at 19–26 is G1; sequence GHVDHGKT. Position 19–26 (19–26) interacts with GTP; it reads GHVDHGKT. Mg(2+) is bound at residue Thr26. Residues 60-64 are G2; sequence GITIN. The tract at residues 81–84 is G3; sequence DCPG. Residues 81–85 and 136–139 contribute to the GTP site; these read DCPGH and NKCD. The tract at residues 136–139 is G4; the sequence is NKCD. The G5 stretch occupies residues 174–176; it reads SAL.

It belongs to the TRAFAC class translation factor GTPase superfamily. Classic translation factor GTPase family. EF-Tu/EF-1A subfamily. As to quaternary structure, monomer.

The protein localises to the cytoplasm. The enzyme catalyses GTP + H2O = GDP + phosphate + H(+). In terms of biological role, GTP hydrolase that promotes the GTP-dependent binding of aminoacyl-tRNA to the A-site of ribosomes during protein biosynthesis. The polypeptide is Elongation factor Tu (Salmonella arizonae (strain ATCC BAA-731 / CDC346-86 / RSK2980)).